We begin with the raw amino-acid sequence, 281 residues long: Digeranylgeranylglyceryl phosphate synthase (281 aa).

Helical transmembrane passes span 14–34 (AMAA…LSSA), 38–58 (VSLS…VTGA), 95–115 (LFLF…CGII), 149–169 (FLFG…VLFL), 207–227 (ASYI…VPYL), 235–255 (YLFV…QILG), and 259–279 (AARS…SFIV).

It belongs to the UbiA prenyltransferase family. DGGGP synthase subfamily. Requires Mg(2+) as cofactor.

It localises to the cell membrane. It carries out the reaction sn-3-O-(geranylgeranyl)glycerol 1-phosphate + (2E,6E,10E)-geranylgeranyl diphosphate = 2,3-bis-O-(geranylgeranyl)-sn-glycerol 1-phosphate + diphosphate. It functions in the pathway membrane lipid metabolism; glycerophospholipid metabolism. In terms of biological role, prenyltransferase that catalyzes the transfer of the geranylgeranyl moiety of geranylgeranyl diphosphate (GGPP) to the C2 hydroxyl of (S)-3-O-geranylgeranylglyceryl phosphate (GGGP). This reaction is the second ether-bond-formation step in the biosynthesis of archaeal membrane lipids. The sequence is that of Digeranylgeranylglyceryl phosphate synthase from Methanococcoides burtonii (strain DSM 6242 / NBRC 107633 / OCM 468 / ACE-M).